A 266-amino-acid chain; its full sequence is MHINYVISLTSAYQRREHIQKEFSQQNIPFEFFDALKPSKELTSLIEKFIPNLLHAKLTEGEKACFMSHYMLWQKCFSEDLPYIYIFEDDVLLGENADKFLAEDEWLEEAFKQTDKFILRFETFLNFSKCKDKKIKPYSGRKILKLVSENCGAAGYVISREAVKQLSAHICSLTSNHLLAIDLLMFNIFNQSTYQVSPGVCVQEGQLYPKDIKLHSQLETERQKYLSVKKKRTLKTVLISLAGKPKKILRKIYRKLFISKHIVPFR.

This sequence belongs to the glycosyltransferase 25 family.

In terms of biological role, involved in extracellular lipooligosaccharide (LOS) biosynthesis and virulence expression. Involved in the synthesis of the oligosaccharide moiety of the LOS molecule by adding GalNAc. The polypeptide is Lipooligosaccharide biosynthesis protein lic2B (lic2B) (Haemophilus influenzae).